The primary structure comprises 171 residues: MSDSASNTEDSIQIEIFPSRILSPETAQKLMGEIYKVDGVIRVMVQGNRLPDRVSAGPGTGEKVEHPLRKPIQIGDQVIELKICVGRIRVELSNAEAKEQIREVCEKLLPFPFEFREGHFLRKKPTVTDYAKLGPEADPRLLGMVDPKAKTDQLIFIEKQKEQEEDKDKDE.

MCR is composed of three subunits: alpha, beta, and gamma. The function of proteins C and D is not known.

This chain is Methyl-coenzyme M reductase operon protein D (mcrD), found in Methanosarcina barkeri (strain Fusaro / DSM 804).